The sequence spans 224 residues: MKLVIKVTGKFFDDQGDKTPLSSAIRSLVQEGHRVALVTGGGTTARKYISLGRSLNLNEASLDLLGIWVARLNAFLMALSMPDLAYSRIPESLEQFLEYWGHGKVVVVGGFQPGQSTAAVSALVAEAISADYLVMVTTVEGVFDSDPKKNPNAKFLPRVTTTELKSILENTQSVKAGTYELLDPMAMKIVERSRIKVIVTSVDKIGKLTRIIKGEETASIVEPV.

6–10 contributes to the ATP binding site; sequence KVTGK. Gly41 provides a ligand contact to UMP. ATP contacts are provided by Gly42 and Arg46. Residues Asp63 and 111-117 each bind UMP; that span reads FQPGQST. 3 residues coordinate ATP: Thr137, Phe143, and Asp146.

It belongs to the UMP kinase family. Homohexamer.

The protein localises to the cytoplasm. It carries out the reaction UMP + ATP = UDP + ADP. It participates in pyrimidine metabolism; CTP biosynthesis via de novo pathway; UDP from UMP (UMPK route): step 1/1. With respect to regulation, inhibited by UTP. In terms of biological role, catalyzes the reversible phosphorylation of UMP to UDP. The chain is Uridylate kinase from Metallosphaera sedula (strain ATCC 51363 / DSM 5348 / JCM 9185 / NBRC 15509 / TH2).